The chain runs to 101 residues: Small ribosomal subunit protein uS14 (101 aa).

Residues 51–72 (LPRDSSPSRQRNPCRQTGRPHG) are disordered. A compositionally biased stretch (polar residues) spans 52 to 65 (PRDSSPSRQRNPCR).

It belongs to the universal ribosomal protein uS14 family. In terms of assembly, part of the 30S ribosomal subunit. Contacts proteins S3 and S10.

Binds 16S rRNA, required for the assembly of 30S particles and may also be responsible for determining the conformation of the 16S rRNA at the A site. This Buchnera aphidicola subsp. Acyrthosiphon kondoi (Acyrthosiphon kondoi symbiotic bacterium) protein is Small ribosomal subunit protein uS14.